The chain runs to 2193 residues: Genome polyprotein (2193 aa).

The N-myristoyl glycine; by host moiety is linked to residue Gly-2. At 2 to 1503 the chain is on the cytoplasmic side; it reads GAQVSTQKTG…HVSRAFICLQ (1502 aa). The tract at residues 567–583 is amphipathic alpha-helix; it reads ELQSDVREAVEGAIGRV. Active-site for protease 2A activity residues include His-880 and Asp-898. Zn(2+)-binding residues include Cys-915 and Cys-917. The active-site For protease 2A activity is the Cys-969. 2 residues coordinate Zn(2+): Cys-975 and His-977. The membrane-binding stretch occupies residues 1109-1181; the sequence is NNRWLKKFTE…EQSAPSQGDQ (73 aa). The tract at residues 1109–1247 is oligomerization; sequence NNRWLKKFTE…SPGAGKSVAT (139 aa). The tract at residues 1130-1134 is RNA-binding; it reads AIKIQ. One can recognise an SF3 helicase domain in the interval 1213-1369; the sequence is EKKMSNYIQF…SMYSQNGKIN (157 aa). Zn(2+)-binding residues include Cys-1377, Cys-1389, and Cys-1394. Residues 1377–1394 form a C4-type; degenerate zinc finger; that stretch reads CDEECCPVNFKKCCPLVC. Residues 1421–1428 are RNA-binding; sequence EYNHRHSV. An oligomerization region spans residues 1432–1437; the sequence is LEALFQ. An intramembrane segment occupies 1504–1519; sequence ALTTFVSVAGIIYIIY. Topologically, residues 1520-2193 are cytoplasmic; sequence KLFAGFQGAY…TLRRKWLDSF (674 aa). At Tyr-1529 the chain carries O-(5'-phospho-RNA)-tyrosine. A Peptidase C3 domain is found at 1549 to 1727; it reads GPAFEFAVAM…FSAALLKHYF (179 aa). Active-site for protease 3C activity residues include His-1588, Glu-1619, and Cys-1695. Positions 1958-2074 constitute a RdRp catalytic domain; that stretch reads GHLIAFDYSG…SYPWPIDASL (117 aa). The Mg(2+) site is built by Asp-1964 and Asp-2060.

The protein belongs to the picornaviruses polyprotein family. In terms of assembly, interacts with capsid protein VP1 and capsid protein VP3 to form heterotrimeric protomers. As to quaternary structure, interacts with capsid protein VP0, and capsid protein VP3 to form heterotrimeric protomers. Five protomers subsequently associate to form pentamers which serve as building blocks for the capsid. Interacts with capsid protein VP2, capsid protein VP3 and capsid protein VP4 following cleavage of capsid protein VP0. Interacts with capsid protein VP1 and capsid protein VP3 in the mature capsid. In terms of assembly, interacts with capsid protein VP0 and capsid protein VP1 to form heterotrimeric protomers. Five protomers subsequently associate to form pentamers which serve as building blocks for the capsid. Interacts with capsid protein VP4 in the mature capsid. Interacts with protein 2C; this interaction may be important for virion morphogenesis. As to quaternary structure, interacts with capsid protein VP1 and capsid protein VP3. Homodimer. In terms of assembly, homohexamer; forms a hexameric ring structure with 6-fold symmetry characteristic of AAA+ ATPases. Interacts (via N-terminus) with host RTN3 (via reticulon domain); this interaction is important for viral replication. Interacts with capsid protein VP3; this interaction may be important for virion morphogenesis. As to quaternary structure, interacts with protein 3CD. Homodimer. Interacts with host GBF1. Interacts (via GOLD domain) with host ACBD3 (via GOLD domain); this interaction allows the formation of a viral protein 3A/ACBD3 heterotetramer with a 2:2 stoichiometry, which will stimulate the recruitment of host PI4KB in order to synthesize PI4P at the viral RNA replication sites. In terms of assembly, interacts with RNA-directed RNA polymerase. As to quaternary structure, interacts with protein 3AB and with RNA-directed RNA polymerase. Interacts with Viral protein genome-linked and with protein 3CD. Requires Mg(2+) as cofactor. Specific enzymatic cleavages in vivo by the viral proteases yield processing intermediates and the mature proteins. In terms of processing, myristoylation is required for the formation of pentamers during virus assembly. Further assembly of 12 pentamers and a molecule of genomic RNA generates the provirion. Post-translationally, during virion maturation, immature virions are rendered infectious following cleavage of VP0 into VP4 and VP2. This maturation seems to be an autocatalytic event triggered by the presence of RNA in the capsid and it is followed by a conformational change infectious virion. Myristoylation is required during RNA encapsidation and formation of the mature virus particle. In terms of processing, VPg is uridylylated by the polymerase into VPg-pUpU. This acts as a nucleotide-peptide primer for the genomic RNA replication.

Its subcellular location is the virion. It localises to the host cytoplasm. The protein resides in the host cytoplasmic vesicle membrane. The protein localises to the host nucleus. It catalyses the reaction a ribonucleoside 5'-triphosphate + H2O = a ribonucleoside 5'-diphosphate + phosphate + H(+). The catalysed reaction is Selective cleavage of Tyr-|-Gly bond in the picornavirus polyprotein.. The enzyme catalyses RNA(n) + a ribonucleoside 5'-triphosphate = RNA(n+1) + diphosphate. It carries out the reaction Selective cleavage of Gln-|-Gly bond in the poliovirus polyprotein. In other picornavirus reactions Glu may be substituted for Gln, and Ser or Thr for Gly.. With respect to regulation, replication or transcription is subject to high level of random mutations by the nucleotide analog ribavirin. Forms an icosahedral capsid of pseudo T=3 symmetry with capsid proteins VP2 and VP3. The capsid is 300 Angstroms in diameter, composed of 60 copies of each capsid protein and enclosing the viral positive strand RNA genome. Capsid protein VP1 mainly forms the vertices of the capsid. Capsid protein VP1 interacts with host cell receptor to provide virion attachment to target host cells. This attachment induces virion internalization. Tyrosine kinases are probably involved in the entry process. After binding to its receptor, the capsid undergoes conformational changes. Capsid protein VP1 N-terminus (that contains an amphipathic alpha-helix) and capsid protein VP4 are externalized. Together, they shape a pore in the host membrane through which viral genome is translocated to host cell cytoplasm. Functionally, forms an icosahedral capsid of pseudo T=3 symmetry with capsid proteins VP2 and VP3. The capsid is 300 Angstroms in diameter, composed of 60 copies of each capsid protein and enclosing the viral positive strand RNA genome. Its function is as follows. Lies on the inner surface of the capsid shell. After binding to the host receptor, the capsid undergoes conformational changes. Capsid protein VP4 is released, Capsid protein VP1 N-terminus is externalized, and together, they shape a pore in the host membrane through which the viral genome is translocated into the host cell cytoplasm. In terms of biological role, component of immature procapsids, which is cleaved into capsid proteins VP4 and VP2 after maturation. Allows the capsid to remain inactive before the maturation step. Cysteine protease that cleaves viral polyprotein and specific host proteins. It is responsible for the autocatalytic cleavage between the P1 and P2 regions, which is the first cleavage occurring in the polyprotein. Also cleaves the host translation initiation factor EIF4G1, in order to shut down the capped cellular mRNA translation. Inhibits the host nucleus-cytoplasm protein and RNA trafficking by cleaving host members of the nuclear pores. Counteracts stress granule formation probably by antagonizing its assembly or promoting its dissassembly. Functionally, plays an essential role in the virus replication cycle by acting as a viroporin. Creates a pore in the host endoplasmic reticulum and as a consequence releases Ca2+ in the cytoplasm of infected cell. In turn, high levels of cytoplasmic calcium may trigger membrane trafficking and transport of viral ER-associated proteins to viroplasms, sites of viral genome replication. Its function is as follows. Induces and associates with structural rearrangements of intracellular membranes. Displays RNA-binding, nucleotide binding and NTPase activities. May play a role in virion morphogenesis and viral RNA encapsidation by interacting with the capsid protein VP3. In terms of biological role, localizes the viral replication complex to the surface of membranous vesicles. Together with protein 3CD binds the Cis-Active RNA Element (CRE) which is involved in RNA synthesis initiation. Acts as a cofactor to stimulate the activity of 3D polymerase, maybe through a nucleid acid chaperone activity. Localizes the viral replication complex to the surface of membranous vesicles. It inhibits host cell endoplasmic reticulum-to-Golgi apparatus transport and causes the disassembly of the Golgi complex, possibly through GBF1 interaction. This would result in depletion of MHC, trail receptors and IFN receptors at the host cell surface. Plays an essential role in viral RNA replication by recruiting ACBD3 and PI4KB at the viral replication sites, thereby allowing the formation of the rearranged membranous structures where viral replication takes place. Functionally, acts as a primer for viral RNA replication and remains covalently bound to viral genomic RNA. VPg is uridylylated prior to priming replication into VPg-pUpU. The oriI viral genomic sequence may act as a template for this. The VPg-pUpU is then used as primer on the genomic RNA poly(A) by the RNA-dependent RNA polymerase to replicate the viral genome. During genome replication, the VPg-RNA linkage is removed by the host TDP2, thereby accelerating replication. During the late stage of the replication cycle, host TDP2 is excluded from sites of viral RNA synthesis and encapsidation, allowing for the generation of progeny virions. Its function is as follows. Involved in the viral replication complex and viral polypeptide maturation. It exhibits protease activity with a specificity and catalytic efficiency that is different from protease 3C. Protein 3CD lacks polymerase activity. Protein 3CD binds to the 5'UTR of the viral genome. In terms of biological role, replicates the viral genomic RNA on the surface of intracellular membranes. May form linear arrays of subunits that propagate along a strong head-to-tail interaction called interface-I. Covalently attaches UMP to a tyrosine of VPg, which is used to prime RNA synthesis. The positive stranded RNA genome is first replicated at virus induced membranous vesicles, creating a dsRNA genomic replication form. This dsRNA is then used as template to synthesize positive stranded RNA genomes. ss(+)RNA genomes are either translated, replicated or encapsidated. Major viral protease that mediates proteolytic processing of the polyprotein. Cleaves host EIF5B, contributing to host translation shutoff. Also cleaves host PABPC1, contributing to host translation shutoff. Cleaves host NLRP1, triggers host N-glycine-mediated degradation of the autoinhibitory NLRP1 N-terminal fragment. This chain is Genome polyprotein, found in Echovirus 9 (strain Hill).